A 155-amino-acid chain; its full sequence is D-aminoacyl-tRNA deacylase (155 aa).

The short motif at Gly-137–Pro-138 is the Gly-cisPro motif, important for rejection of L-amino acids element.

This sequence belongs to the DTD family. In terms of assembly, homodimer.

It localises to the cytoplasm. The enzyme catalyses glycyl-tRNA(Ala) + H2O = tRNA(Ala) + glycine + H(+). It carries out the reaction a D-aminoacyl-tRNA + H2O = a tRNA + a D-alpha-amino acid + H(+). Functionally, an aminoacyl-tRNA editing enzyme that deacylates mischarged D-aminoacyl-tRNAs. Also deacylates mischarged glycyl-tRNA(Ala), protecting cells against glycine mischarging by AlaRS. Acts via tRNA-based rather than protein-based catalysis; rejects L-amino acids rather than detecting D-amino acids in the active site. By recycling D-aminoacyl-tRNA to D-amino acids and free tRNA molecules, this enzyme counteracts the toxicity associated with the formation of D-aminoacyl-tRNA entities in vivo and helps enforce protein L-homochirality. This is D-aminoacyl-tRNA deacylase from Paracidovorax citrulli (strain AAC00-1) (Acidovorax citrulli).